A 447-amino-acid polypeptide reads, in one-letter code: Chitobiosyldiphosphodolichol beta-mannosyltransferase (447 aa).

Residues 1–2 are Cytoplasmic-facing; it reads MT. Residues 3–23 form a helical; Signal-anchor for type II membrane protein membrane-spanning segment; it reads LVLLLSIFAICFSSVAFIQLL. The Lumenal portion of the chain corresponds to 24–447; that stretch reads PTRREKKSSE…IAGTFLGLVT (424 aa).

It belongs to the glycosyltransferase group 1 family. Glycosyltransferase 33 subfamily.

Its subcellular location is the endoplasmic reticulum membrane. The catalysed reaction is an N,N'-diacetylchitobiosyl-diphospho-di-trans,poly-cis-dolichol + GDP-alpha-D-mannose = a beta-D-Man-(1-&gt;4)-beta-D-GlcNAc-(1-&gt;4)-alpha-D-GlcNAc-diphospho-di-trans,poly-cis-dolichol + GDP + H(+). It participates in protein modification; protein glycosylation. Functionally, participates in the formation of the lipid-linked precursor oligosaccharide for N-glycosylation. Involved in assembling the dolichol-pyrophosphate-GlcNAc(2)-Man(5) intermediate on the cytoplasmic surface of the ER. This is Chitobiosyldiphosphodolichol beta-mannosyltransferase from Arthroderma benhamiae (strain ATCC MYA-4681 / CBS 112371) (Trichophyton mentagrophytes).